Here is a 149-residue protein sequence, read N- to C-terminus: Arginine repressor (149 aa).

This sequence belongs to the ArgR family.

The protein localises to the cytoplasm. Its pathway is amino-acid biosynthesis; L-arginine biosynthesis [regulation]. Functionally, regulates arginine biosynthesis genes. The sequence is that of Arginine repressor from Halalkalibacterium halodurans (strain ATCC BAA-125 / DSM 18197 / FERM 7344 / JCM 9153 / C-125) (Bacillus halodurans).